A 1177-amino-acid chain; its full sequence is DNA-directed RNA polymerase subunit beta' (1177 aa).

Zn(2+)-binding residues include C60, C62, C75, and C78. D450, D452, and D454 together coordinate Mg(2+). Zn(2+) contacts are provided by C795, C869, C876, and C879.

The protein belongs to the RNA polymerase beta' chain family. As to quaternary structure, the RNAP catalytic core consists of 2 alpha, 1 beta, 1 beta' and 1 omega subunit. When a sigma factor is associated with the core the holoenzyme is formed, which can initiate transcription. Mg(2+) is required as a cofactor. It depends on Zn(2+) as a cofactor.

The catalysed reaction is RNA(n) + a ribonucleoside 5'-triphosphate = RNA(n+1) + diphosphate. Functionally, DNA-dependent RNA polymerase catalyzes the transcription of DNA into RNA using the four ribonucleoside triphosphates as substrates. The polypeptide is DNA-directed RNA polymerase subunit beta' (Clostridium botulinum (strain Alaska E43 / Type E3)).